The primary structure comprises 132 residues: Small ribosomal subunit protein uS11 (132 aa).

Belongs to the universal ribosomal protein uS11 family. Part of the 30S ribosomal subunit.

In terms of biological role, located on the platform of the 30S subunit. This Thermoplasma volcanium (strain ATCC 51530 / DSM 4299 / JCM 9571 / NBRC 15438 / GSS1) protein is Small ribosomal subunit protein uS11.